A 116-amino-acid chain; its full sequence is Protein SPIRAL1-like 1 (116 aa).

The span at 1–12 shows a compositional bias: gly residues; that stretch reads MSRGGSAGGGQS. Residues 1 to 116 are disordered; the sequence is MSRGGSAGGG…SSLGYLFGGN (116 aa). Pro residues predominate over residues 27–43; sequence AAKPAPAAAPAPAPAPA. Residues 44–60 are compositionally biased toward low complexity; sequence PAAAVAAPAEKPSPAKA. A compositionally biased stretch (polar residues) spans 72-90; sequence GSRSNNNYHRADGQNTGNF. Residues 103-116 show a composition bias toward gly residues; it reads PGGGSSLGYLFGGN.

This sequence belongs to the SPIRAL1 family.

Its function is as follows. Acts in maintaining the cortical microtubules organization essential for anisotropic cell growth. This chain is Protein SPIRAL1-like 1, found in Oryza sativa subsp. japonica (Rice).